Consider the following 353-residue polypeptide: Mitochondrial distribution and morphology protein 10 (353 aa).

Belongs to the MDM10 family. Component of the ER-mitochondria encounter structure (ERMES) or MDM complex, composed of MMM1, MDM10, MDM12 and MDM34. Associates with the mitochondrial outer membrane sorting assembly machinery SAM(core) complex.

Its subcellular location is the mitochondrion outer membrane. Its function is as follows. Component of the ERMES/MDM complex, which serves as a molecular tether to connect the endoplasmic reticulum and mitochondria. Components of this complex are involved in the control of mitochondrial shape and protein biogenesis and may function in phospholipid exchange. MDM10 is involved in the late assembly steps of the general translocase of the mitochondrial outer membrane (TOM complex). Functions in the TOM40-specific route of the assembly of outer membrane beta-barrel proteins, including the association of TOM40 with the receptor TOM22 and small TOM proteins. Can associate with the SAM(core) complex as well as the MDM12-MMM1 complex, both involved in late steps of the major beta-barrel assembly pathway, that is responsible for biogenesis of all outer membrane beta-barrel proteins. May act as a switch that shuttles between both complexes and channels precursor proteins into the TOM40-specific pathway. Plays a role in mitochondrial morphology and in the inheritance of mitochondria. This Yarrowia lipolytica (strain CLIB 122 / E 150) (Yeast) protein is Mitochondrial distribution and morphology protein 10.